A 159-amino-acid chain; its full sequence is Small ribosomal subunit protein bS6 (159 aa).

A compositionally biased stretch (basic and acidic residues) spans 93 to 151; that stretch reads VDEHEEGPSAMMRKADRDRERDDRGPREGGFRGDREGRGDREGGGFRGDRGPRRPREDA. Residues 93–159 form a disordered region; the sequence is VDEHEEGPSA…DADTAAASEE (67 aa).

Belongs to the bacterial ribosomal protein bS6 family.

Functionally, binds together with bS18 to 16S ribosomal RNA. This Rhodopseudomonas palustris (strain HaA2) protein is Small ribosomal subunit protein bS6.